Reading from the N-terminus, the 388-residue chain is NADH-quinone oxidoreductase subunit D 2 (388 aa).

Belongs to the complex I 49 kDa subunit family. As to quaternary structure, NDH-1 is composed of 14 different subunits. Subunits NuoB, C, D, E, F, and G constitute the peripheral sector of the complex.

The protein localises to the cell membrane. The enzyme catalyses a quinone + NADH + 5 H(+)(in) = a quinol + NAD(+) + 4 H(+)(out). In terms of biological role, NDH-1 shuttles electrons from NADH, via FMN and iron-sulfur (Fe-S) centers, to quinones in the respiratory chain. The immediate electron acceptor for the enzyme in this species is believed to be a menaquinone. Couples the redox reaction to proton translocation (for every two electrons transferred, four hydrogen ions are translocated across the cytoplasmic membrane), and thus conserves the redox energy in a proton gradient. This Salinispora tropica (strain ATCC BAA-916 / DSM 44818 / JCM 13857 / NBRC 105044 / CNB-440) protein is NADH-quinone oxidoreductase subunit D 2.